The sequence spans 506 residues: Maturase K (506 aa).

This sequence belongs to the intron maturase 2 family. MatK subfamily.

The protein resides in the plastid. It is found in the chloroplast. In terms of biological role, usually encoded in the trnK tRNA gene intron. Probably assists in splicing its own and other chloroplast group II introns. The sequence is that of Maturase K from Wisteria frutescens (American wisteria).